Consider the following 1030-residue polypeptide: uncharacterized protein (1030 aa).

The segment at 51-86 (IKVSFTAKDGELTCKCSCLANVDNCVHIVAVLLKYH) adopts an SWIM-type zinc-finger fold. One can recognise a Helicase ATP-binding domain in the interval 590–751 (RGLEENKFGG…WSCFDFVLPS (162 aa)). ATP is bound at residue 603–610 (DEMGLGKT). Residues 702–705 (DEAQ) carry the DEAQ box motif. Residues 867-1021 (ALEIIHEAIE…EDVNFFESLT (155 aa)) form the Helicase C-terminal domain.

This sequence belongs to the SNF2/RAD54 helicase family.

This is an uncharacterized protein from Mycoplasma pneumoniae (strain ATCC 29342 / M129 / Subtype 1) (Mycoplasmoides pneumoniae).